Here is a 346-residue protein sequence, read N- to C-terminus: Putative isoaspartyl peptidase/L-asparaginase (346 aa).

Thr207 serves as the catalytic Nucleophile. Substrate contacts are provided by residues 235–238 (RVGD) and 257–260 (TGTG).

The protein belongs to the Ntn-hydrolases family. As to quaternary structure, heterodimer of an alpha and beta chain produced by autocleavage. Post-translationally, cleaved into an alpha and beta chain by autocatalysis; this activates the enzyme. The N-terminal residue of the beta subunit is responsible for the nucleophile hydrolase activity.

The catalysed reaction is Cleavage of a beta-linked Asp residue from the N-terminus of a polypeptide.. It catalyses the reaction L-asparagine + H2O = L-aspartate + NH4(+). Functionally, has both L-asparaginase and beta-aspartyl peptidase activity. Does not have aspartylglucosaminidase activity and is inactive toward GlcNAc-L-Asn. Likewise, has no activity toward glutamine. In Dictyostelium discoideum (Social amoeba), this protein is Putative isoaspartyl peptidase/L-asparaginase.